We begin with the raw amino-acid sequence, 166 residues long: Small ribosomal subunit protein uS5 (166 aa).

In terms of domain architecture, S5 DRBM spans 11–74 (LQEKLIAVNR…EKARRNMINV (64 aa)).

The protein belongs to the universal ribosomal protein uS5 family. In terms of assembly, part of the 30S ribosomal subunit. Contacts proteins S4 and S8.

With S4 and S12 plays an important role in translational accuracy. Its function is as follows. Located at the back of the 30S subunit body where it stabilizes the conformation of the head with respect to the body. The sequence is that of Small ribosomal subunit protein uS5 from Actinobacillus succinogenes (strain ATCC 55618 / DSM 22257 / CCUG 43843 / 130Z).